A 689-amino-acid polypeptide reads, in one-letter code: DNA ligase (689 aa).

NAD(+) is bound by residues D40 to D44, S89 to L90, and E121. Catalysis depends on K123, which acts as the N6-AMP-lysine intermediate. NAD(+) is bound by residues R144, E179, K295, and K319. 4 residues coordinate Zn(2+): C413, C416, C431, and C437. Residues R610–V689 form the BRCT domain.

Belongs to the NAD-dependent DNA ligase family. LigA subfamily. Requires Mg(2+) as cofactor. The cofactor is Mn(2+).

The catalysed reaction is NAD(+) + (deoxyribonucleotide)n-3'-hydroxyl + 5'-phospho-(deoxyribonucleotide)m = (deoxyribonucleotide)n+m + AMP + beta-nicotinamide D-nucleotide.. DNA ligase that catalyzes the formation of phosphodiester linkages between 5'-phosphoryl and 3'-hydroxyl groups in double-stranded DNA using NAD as a coenzyme and as the energy source for the reaction. It is essential for DNA replication and repair of damaged DNA. This is DNA ligase from Rickettsia africae (strain ESF-5).